We begin with the raw amino-acid sequence, 515 residues long: E3 ubiquitin-protein ligase RNF38 (515 aa).

The Bipartite nuclear localization signal 1 signature appears at 57–71 (DSPSPKRQRLSHSVF). Positions 73–141 (YTSASPAPSP…LSRHNSISQD (69 aa)) are disordered. Residues 89-104 (MTSNRQPPSVRPSQHH) are compositionally biased toward polar residues. The short motif at 115–131 (RNRRSPPVRRQRGRRDR) is the Bipartite nuclear localization signal 2 element. Residues 115–134 (RNRRSPPVRRQRGRRDRLSR) show a composition bias toward basic residues. Residues 463–504 (CVVCMCDFESRQLLRVLPCNHEFHAKCVDKWLKANRTCPICR) form an RING-type zinc finger.

Widely expressed with highest levels in testis.

Its subcellular location is the nucleus. It catalyses the reaction S-ubiquitinyl-[E2 ubiquitin-conjugating enzyme]-L-cysteine + [acceptor protein]-L-lysine = [E2 ubiquitin-conjugating enzyme]-L-cysteine + N(6)-ubiquitinyl-[acceptor protein]-L-lysine.. The protein operates within protein modification; protein ubiquitination. Acts as an E3 ubiquitin-protein ligase able to ubiquitinate p53/TP53 which promotes its relocalization to discrete foci associated with PML nuclear bodies. Exhibits preference for UBE2D2 as a E2 enzyme. This Homo sapiens (Human) protein is E3 ubiquitin-protein ligase RNF38.